A 148-amino-acid chain; its full sequence is UPF0178 protein DP1304 (148 aa).

This sequence belongs to the UPF0178 family.

In Desulfotalea psychrophila (strain LSv54 / DSM 12343), this protein is UPF0178 protein DP1304.